The following is a 214-amino-acid chain: Ribosomal RNA small subunit methyltransferase G (214 aa).

S-adenosyl-L-methionine-binding positions include Gly81, Met86, 132–133, and Arg147; that span reads VE.

It belongs to the methyltransferase superfamily. RNA methyltransferase RsmG family.

It is found in the cytoplasm. The enzyme catalyses guanosine(527) in 16S rRNA + S-adenosyl-L-methionine = N(7)-methylguanosine(527) in 16S rRNA + S-adenosyl-L-homocysteine. In terms of biological role, specifically methylates the N7 position of guanine in position 527 of 16S rRNA. The chain is Ribosomal RNA small subunit methyltransferase G from Pseudomonas aeruginosa (strain LESB58).